The chain runs to 722 residues: WD repeat-containing and planar cell polarity effector protein fritz homolog (722 aa).

WD repeat units lie at residues 305–343 (LRSK…TLLA) and 344–383 (QAEL…INIQ). A disordered region spans residues 655–710 (IPNGPSSRWAIERRTEEEEEEEEEEEEELCTDSSGATTWNAEGELKEDQRKQDIGD). Acidic residues predominate over residues 671–684 (EEEEEEEEEEEELC). The segment covering 685-694 (TDSSGATTWN) has biased composition (polar residues). The segment covering 697 to 708 (GELKEDQRKQDI) has biased composition (basic and acidic residues).

Belongs to the WD repeat fritz family. In terms of assembly, component of the CPLANE (ciliogenesis and planar polarity effectors) complex, composed of INTU, FUZ and WDPCP. Interacts with CPLANE1.

It localises to the cell membrane. The protein localises to the cytoplasm. Its subcellular location is the cytoskeleton. It is found in the cilium axoneme. The protein resides in the cilium basal body. In terms of biological role, probable effector of the planar cell polarity signaling pathway which regulates the septin cytoskeleton in both ciliogenesis and collective cell movements. Together with FUZ and WDPCP proposed to function as core component of the CPLANE (ciliogenesis and planar polarity effectors) complex involved in the recruitment of peripheral IFT-A proteins to basal bodies. Binds phosphatidylinositol 3-phosphate with highest affinity, followed by phosphatidylinositol 4-phosphate and phosphatidylinositol 5-phosphate. This is WD repeat-containing and planar cell polarity effector protein fritz homolog (Wdpcp) from Mus musculus (Mouse).